We begin with the raw amino-acid sequence, 390 residues long: Formate-dependent phosphoribosylglycinamide formyltransferase (390 aa).

N(1)-(5-phospho-beta-D-ribosyl)glycinamide is bound by residues 14 to 15 (EL) and glutamate 74. ATP contacts are provided by residues arginine 106, lysine 147, 152-157 (SSGKGQ), 187-190 (EQFI), and glutamate 195. One can recognise an ATP-grasp domain in the interval 111–304 (DLAAQELGIT…EFDLHARAIM (194 aa)). Mg(2+) is bound by residues glutamate 263 and glutamate 275. N(1)-(5-phospho-beta-D-ribosyl)glycinamide is bound by residues aspartate 282, lysine 351, and 358–359 (RR).

This sequence belongs to the PurK/PurT family. In terms of assembly, homodimer.

The enzyme catalyses N(1)-(5-phospho-beta-D-ribosyl)glycinamide + formate + ATP = N(2)-formyl-N(1)-(5-phospho-beta-D-ribosyl)glycinamide + ADP + phosphate + H(+). Its pathway is purine metabolism; IMP biosynthesis via de novo pathway; N(2)-formyl-N(1)-(5-phospho-D-ribosyl)glycinamide from N(1)-(5-phospho-D-ribosyl)glycinamide (formate route): step 1/1. In terms of biological role, involved in the de novo purine biosynthesis. Catalyzes the transfer of formate to 5-phospho-ribosyl-glycinamide (GAR), producing 5-phospho-ribosyl-N-formylglycinamide (FGAR). Formate is provided by PurU via hydrolysis of 10-formyl-tetrahydrofolate. This chain is Formate-dependent phosphoribosylglycinamide formyltransferase, found in Erythrobacter litoralis (strain HTCC2594).